The following is a 278-amino-acid chain: MFSQLSTNFYPTILQPQTVHRGTAPPNALPAERAPCLIGRPVHFAHGPFAGRTIRASLDEIQAAQLGRKYARVDRRPLDPPPAVRLRLFNVYNAGTEQQTEEEFEEYGDTLGLGFVCTLDLFPLPEGSSCHRSPGPYAEPPVHRVGGCAIYESEKATNALVGSTFVQPTCVTFEGRSTLVFVFSDLAVKYEGEFLLRYRVFDLFSLPRGHRDIAIQAECYGAAFRIYTTKDFPGLPPSTALTKELARVGVRLSVRDTGKKATTKRRKRSDSFDEDDSS.

Positions 51 to 255 constitute a Velvet domain; it reads GRTIRASLDE…ARVGVRLSVR (205 aa). Positions 257-278 are disordered; that stretch reads TGKKATTKRRKRSDSFDEDDSS.

The protein belongs to the velvet family.

It is found in the nucleus. In terms of biological role, velvet-domain-containing protein that probably acts as a positive regulator of sexual development. The polypeptide is Probable velvet family sexual development regulator SCHCODRAFT_28806 (Schizophyllum commune (strain H4-8 / FGSC 9210) (Split gill fungus)).